A 2515-amino-acid chain; its full sequence is Polyprotein P1234 (2515 aa).

Positions 30–260 (VAQQATPNDH…EHRASLQSWH (231 aa)) constitute an Alphavirus-like MT domain. The interval 245–264 (GSTLYPEHRASLQSWHLPSV) is nsP1 membrane-binding. C420 carries the S-palmitoyl cysteine; by host lipid modification. Residues 695 to 850 (ELTNPPYHEL…RDICTKTFYK (156 aa)) enclose the (+)RNA virus helicase ATP-binding domain. 726–733 (GTPGSGKS) serves as a coordination point for a ribonucleoside 5'-triphosphate. A (+)RNA virus helicase C-terminal domain is found at 851-999 (FISRRCTQPV…IEDWEAEHKG (149 aa)). The Peptidase C9 domain maps to 1012–1341 (NPFSCKTNVC…CVISSVYEGT (330 aa)). The interval 1013 to 1032 (PFSCKTNVCWAKALEPILAT) is nucleolus localization signal. Residue C1021 is the For cysteine protease nsP2 activity of the active site. A Nuclear export signal motif is present at residues 1066 to 1075 (IKFFGMDLTS). H1098 functions as the For cysteine protease nsP2 activity in the catalytic mechanism. The Nuclear localization signal signature appears at 1196 to 1200 (PHKRI). The Macro domain maps to 1348 to 1507 (APSYRTKREN…RIDAVLQLKE (160 aa)). N1371, G1379, G1459, I1460, and Y1461 together coordinate ADP-D-ribose. Zn(2+)-binding residues include C1610, C1612, C1635, and C1653. Disordered regions lie at residues 1678–1705 (QPAA…DNTS) and 1777–1797 (LAAA…SSAD). 2 consecutive short sequence motifs (FGDF; binding to host G3BP1) follow at residues 1839-1842 (FGSF) and 1862-1865 (FGSF). The RdRp catalytic domain maps to 2269-2384 (DPVLETDIAS…HGVVSDKEMA (116 aa)).

As to quaternary structure, interacts with non-structural protein 3. Interacts with RNA-directed RNA polymerase nsP4. Interacts with protease nsP2. interacts with itself. Interacts with mRNA-capping enzyme nsP1. Interacts with host DDX1. Interacts with host DDX3. Interacts (via C-terminus) with host G3BP1; this interaction inhibits the formation of host stress granules on viral mRNAs and the nsp3-G3BP1 complexes bind viral RNAs and probably orchestrate the assembly of viral replication complexes. Interacts (via C-terminus) with host G3BP2; this interaction inhibits the formation of host stress granules on viral mRNAs and the nsp3-G3BP2 complexes bind viral RNAs and probably orchestrate the assembly of viral replication complexes. In terms of assembly, interacts with mRNA-capping enzyme nsP1. Interacts with protease nsP2. interacts with itself. As to quaternary structure, interacts with RNA-directed RNA polymerase nsP4. Interacts with mRNA-capping enzyme nsP1. Interacts with KPNA1/karyopherin-alpha1; this interaction probably allows the active transport of protease nsP2 into the host nucleus. It depends on Mg(2+) as a cofactor. Mn(2+) serves as cofactor. Specific enzymatic cleavages in vivo yield mature proteins. The processing of the polyprotein is temporally regulated. In early stages (1.7 hpi), P1234 is first cleaved in trans through its nsP2 protease activity, releasing P123' and nsP4, which associate to form the early replication complex. At the same time, P1234 is also cut at the nsP1/nsP2 site early in infection but with lower efficiency. After replication of the viral minus-strand RNAs (4 hpi), the polyproteins are cut at the nsP1/nsP2 and nsP2/nsP3 sites very efficiently, preventing accumulation of P123' and P1234 and allowing the formation of the late replication complex. NsP3'/nsP4 site is not cleaved anymore and P34 is produced rather than nsP4. In terms of processing, specific enzymatic cleavages in vivo yield mature proteins. The processing of the polyprotein is temporally regulated. In early stages (1.7 hpi), P123 is cleaved at the nsP1/nsP2 site with low efficiency. After replication of the viral minus-strand RNAs (4 hpi), the polyproteins are cut at the nsP1/nsP2 and nsP2/nsP3 sites very efficiently, preventing accumulation of P123 and allowing the formation of the late replication complex. Post-translationally, specific enzymatic cleavages in vivo yield mature proteins. The processing of the polyprotein is temporally regulated. In early stages (1.7 hpi), P123' is cleaved at the nsP1/nsP2 site with low efficiency. After replication of the viral minus-strand RNAs (4 hpi), the polyproteins are cut at the nsP1/nsP2 and nsP2/nsP3 sites very efficiently, preventing accumulation of P123' and allowing the formation of the late replication complex. Palmitoylated by host palmitoyltransferases ZDHHC2 and ZDHHC19. In terms of processing, phosphorylated by host on serines and threonines. Post-translationally, ubiquitinated; targets the protein for rapid degradation via the ubiquitin system. Nsp4 is present in extremely low quantities due to low frequency of translation through the amber stop-codon and the degradation by the ubiquitin pathway.

The protein localises to the host cytoplasmic vesicle membrane. It localises to the host cell membrane. Its subcellular location is the host cell projection. The protein resides in the host filopodium. It is found in the host nucleus. The protein localises to the host cytoplasm. It carries out the reaction GTP + S-adenosyl-L-methionine = N(7)-methyl-GTP + S-adenosyl-L-homocysteine. It catalyses the reaction N(7)-methyl-GTP + L-histidyl-[protein] = N(tele)-(N(7)-methylguanosine 5'-phospho)-L-histidyl-[protein] + diphosphate. The enzyme catalyses N(tele)-(N(7)-methylguanosine 5'-phospho)-L-histidyl-[protein] + a 5'-end diphospho-(purine-ribonucleoside) in mRNA + H(+) = a 5'-end (N(7)-methyl 5'-triphosphoguanosine)-(purine-ribonucleoside) in mRNA + L-histidyl-[protein]. The catalysed reaction is a 5'-end triphospho-ribonucleoside in mRNA + H2O = a 5'-end diphospho-ribonucleoside in mRNA + phosphate + H(+). It carries out the reaction a ribonucleoside 5'-triphosphate + H2O = a ribonucleoside 5'-diphosphate + phosphate + H(+). It catalyses the reaction ATP + H2O = ADP + phosphate + H(+). The enzyme catalyses RNA(n) + a ribonucleoside 5'-triphosphate = RNA(n+1) + diphosphate. The catalysed reaction is RNA(n) + ATP = RNA(n)-3'-adenine ribonucleotide + diphosphate. It carries out the reaction 4-O-(ADP-D-ribosyl)-L-aspartyl-[protein] + H2O = L-aspartyl-[protein] + ADP-D-ribose + H(+). It catalyses the reaction 5-O-(ADP-D-ribosyl)-L-glutamyl-[protein] + H2O = L-glutamyl-[protein] + ADP-D-ribose + H(+). The enzyme catalyses ADP-alpha-D-ribose 1''-phosphate + H2O = ADP-D-ribose + phosphate. Functionally, inactive precursor of the viral replicase, which is activated by cleavages carried out by the viral protease nsP2. Its function is as follows. The early replication complex formed by the polyprotein P123 and nsP4 synthesizes minus-strand RNAs. As soon P123 is cleaved into mature proteins, the plus-strand RNAs synthesis begins. The early replication complex formed by the polyprotein P123' and nsP4 synthesizes minus-strand RNAs. Polyprotein P123' is a short-lived polyprotein that accumulates during early stage of infection. As soon P123' is cleaved into mature proteins, the plus-strand RNAs synthesis begins. In terms of biological role, cytoplasmic capping enzyme that catalyzes two virus-specific reactions: methyltransferase and nsP1 guanylyltransferase. mRNA-capping is necessary since all viral RNAs are synthesized in the cytoplasm, and host capping enzymes are restricted to the nucleus. The enzymatic reaction involves a covalent link between 7-methyl-GMP and nsP1, whereas eukaryotic capping enzymes form a covalent complex only with GMP. nsP1 capping consists in the following reactions: GTP is first methylated into 7-methyl-GMP and then is covalently linked to nsP1 to form the m7GMp-nsP1 complex from which 7-methyl-GMP complex is transferred to the mRNA to create the cap structure. NsP1 is needed for the initiation of the minus-strand RNAs synthesis. Probably serves as a membrane anchor for the replication complex composed of nsP1-nsP4. Palmitoylated nsP1 is remodeling host cell cytoskeleton, and induces filopodium-like structure formation at the surface of the host cell. Interacts with host TMEM45B; this interaction leads to viral replication inhibition. Functionally, multifunctional protein whose N-terminus is part of the RNA polymerase complex and displays NTPase, RNA triphosphatase and helicase activities. NTPase and RNA triphosphatase are involved in viral RNA capping and helicase keeps a check on the dsRNA replication intermediates. The C-terminus harbors a protease that specifically cleaves the polyproteins and releases the mature proteins. Required for the shutoff of minus-strand RNAs synthesis. Specifically inhibits the host IFN response by promoting the nuclear export of host STAT1. Also inhibits host transcription by inducing rapid proteasome-dependent degradation of POLR2A, a catalytic subunit of the RNAPII complex. The resulting inhibition of cellular protein synthesis serves to ensure maximal viral gene expression and to evade host immune response. Its function is as follows. Seems to be essential for minus-strand RNAs and subgenomic 26S mRNAs synthesis. Displays mono-ADP-ribosylhydrolase activity. ADP-ribosylation is a post-translational modification that controls various processes of the host cell and the virus probably needs to revert it for optimal viral replication. Binds proteins of FXR family and sequesters them into the viral RNA replication complexes thereby inhibiting the formation of host stress granules on viral mRNAs. The nsp3'-FXR complexes bind viral RNAs and probably orchestrate the assembly of viral replication complexes, thanks to the ability of FXR family members to self-assemble and bind DNA. Seems to be essential for minus-strand RNAs and subgenomic 26S mRNAs synthesis. Displays mono-ADP-ribosylhydrolase activity. ADP-ribosylation is a post-translantional modification that controls various processes of the host cell and the virus probably needs to revert it for optimal viral replication. Binds proteins of G3BP family and sequesters them into the viral RNA replication complexes thereby inhibiting the formation of host stress granules on viral mRNAs. The nsp3-G3BP complexes bind viral RNAs and probably orchestrate the assembly of viral replication complexes, thanks to the ability of G3BP family members to self-assemble and bind DNA. In terms of biological role, RNA dependent RNA polymerase. Replicates genomic and antigenomic RNA by recognizing replications specific signals. The early replication complex formed by the polyprotein P123 and nsP4 synthesizes minus-strand RNAs. The late replication complex composed of fully processed nsP1-nsP4 is responsible for the production of genomic and subgenomic plus-strand RNAs. The core catalytic domain of nsP4 also possesses terminal adenylyltransferase (TATase) activity that is probably involved in maintenance and repair of the poly(A) tail, an element required for replication of the viral genome. Interacts with host TMEM45B; this interaction leads to viral replication inhibition. This Acrocephalus scirpaceus (Eurasian reed-warbler) protein is Polyprotein P1234.